The following is a 730-amino-acid chain: Cyclin-T2 (730 aa).

The interaction with MDFIC and MDFI stretch occupies residues 1 to 300 (MASGRGASSR…SVTGVPTNPS (300 aa)). A Cyclin N-terminal domain is found at 12–147 (FFTREQLENT…IMLQTLGFEI (136 aa)). Residues 250–300 (RLKKIRNWRANQAARKPKVDGQVSETPLLGSSLVQNSILVDSVTGVPTNPS) are interaction with POLR2A. Composition is skewed to polar residues over residues 341–350 (TSYGLSSHQE) and 360–389 (TEQL…SISL). The interval 341 to 430 (TSYGLSSHQE…GPISTTPGII (90 aa)) is disordered. Over residues 398-412 (DKISDHSSVKQEYTH) the composition is skewed to basic and acidic residues. Residue K407 forms a Glycyl lysine isopeptide (Lys-Gly) (interchain with G-Cter in SUMO2) linkage. At S480 the chain carries Phosphoserine. The segment at 497 to 652 (DKKEKSGSLK…SSSSSSSSVK (156 aa)) is disordered. Composition is skewed to basic and acidic residues over residues 517-543 (SASK…EGSG) and 552-565 (ISRD…EHPS). Positions 566–578 (SRHHTSSHKHSHS) are enriched in basic residues. Over residues 579–588 (HSGSSSGGSK) the composition is skewed to low complexity. S601 bears the Phosphoserine mark. 2 stretches are compositionally biased toward low complexity: residues 606–616 (SSDGISSSSSS) and 637–652 (SSKS…SSVK).

This sequence belongs to the cyclin family. Cyclin C subfamily. As to quaternary structure, interacts with CDK9 to form P-TEFb. Interacts with POLR2A (via the C-terminal domain (CTD)); mediates transcriptional activity. Interacts with HEXIM1; mediates formation of a tripartite complex with KPNA2. Interacts with HEXIM2. Interacts with PKN1; enhances MYOD1-dependent transcription. P-TEFB complex interacts with RB1; promotes phosphorylation of RB1. P-TEFB complex interacts with MYOD1; promotes the transcriptional activity of MYOD1 through its CDK9-mediated phosphorylation. Interacts with MDFI and MDFIC. Interacts with MON1B; down-regulates CCNT2-mediated activation of viral promoters during herpes simplex virus 1/HHV-1 infection. In terms of assembly, (Microbial infection) Interacts with HIV-2 and SIV Tat. Does not bind efficiently to the transactivation domain of the HIV-1 Tat. As to expression, ubiquitously expressed.

Its subcellular location is the cytoplasm. The protein resides in the perinuclear region. The protein localises to the nucleus. Its function is as follows. Regulatory subunit of the cyclin-dependent kinase pair (CDK9/cyclin T) complex, also called positive transcription elongation factor B (P-TEFB), which is proposed to facilitate the transition from abortive to production elongation by phosphorylating the CTD (carboxy-terminal domain) of the large subunit of RNA polymerase II (RNAP II). The activity of this complex is regulated by binding with 7SK snRNA. Plays a role during muscle differentiation; P-TEFB complex interacts with MYOD1; this tripartite complex promotes the transcriptional activity of MYOD1 through its CDK9-mediated phosphorylation and binds the chromatin of promoters and enhancers of muscle-specific genes; this event correlates with hyperphosphorylation of the CTD domain of RNA pol II. In addition, enhances MYOD1-dependent transcription through interaction with PKN1. Involved in early embryo development. (Microbial infection) Promotes transcriptional activation of early and late herpes simplex virus 1/HHV-1 promoters. The protein is Cyclin-T2 of Homo sapiens (Human).